Here is a 524-residue protein sequence, read N- to C-terminus: Thioredoxin reductase 2, mitochondrial (524 aa).

A mitochondrion-targeting transit peptide spans 1 to 34 (MVAAMVAALRGPSRRFRPRTRALTRGTRGAASAA). 41 to 70 (DLLVIGGGSGGLACAKEAAQLGKKVAVADY) contributes to the FAD binding site. Lys-79 carries the post-translational modification N6-succinyllysine. Cys-86 and Cys-91 are disulfide-bonded. Lys-175 and Lys-329 each carry N6-succinyllysine. His-497 serves as the catalytic Proton acceptor. A cross-link (cysteinyl-selenocysteine (Cys-Sec)) is located at residues 522 to 523 (CU). Residue Sec-523 is a non-standard amino acid, selenocysteine.

This sequence belongs to the class-I pyridine nucleotide-disulfide oxidoreductase family. In terms of assembly, homodimer. Requires FAD as cofactor. Expressed in liver, heart, testis and kidney.

Its subcellular location is the mitochondrion. The enzyme catalyses [thioredoxin]-dithiol + NADP(+) = [thioredoxin]-disulfide + NADPH + H(+). Its function is as follows. Involved in the control of reactive oxygen species levels and the regulation of mitochondrial redox homeostasis. Maintains thioredoxin in a reduced state. May play a role in redox-regulated cell signaling. This Mus musculus (Mouse) protein is Thioredoxin reductase 2, mitochondrial.